The following is a 402-amino-acid chain: Ketol-acid reductoisomerase, mitochondrial (402 aa).

Residues 1–26 (MAARNCTKALRPLARQLATPAVQRRT) constitute a mitochondrion transit peptide. Positions 63–252 (KEEVHERADW…AVGSGYLYET (190 aa)) constitute a KARI N-terminal Rossmann domain. NADP(+) contacts are provided by residues 90–99 (GYGSQGHGQG), 114–119 (RKNGKS), and 152–156 (SDAAQ). Residue His177 is part of the active site. The 148-residue stretch at 253–400 (TFEKEVYSDL…KAVRSLRPEN (148 aa)) folds into the KARI C-terminal knotted domain. Mg(2+)-binding residues include Asp261, Glu265, Glu297, and Glu301. Ser323 provides a ligand contact to substrate.

It belongs to the ketol-acid reductoisomerase family. Mg(2+) is required as a cofactor.

It localises to the mitochondrion. The enzyme catalyses (2R)-2,3-dihydroxy-3-methylbutanoate + NADP(+) = (2S)-2-acetolactate + NADPH + H(+). It catalyses the reaction (2R,3R)-2,3-dihydroxy-3-methylpentanoate + NADP(+) = (S)-2-ethyl-2-hydroxy-3-oxobutanoate + NADPH + H(+). Its pathway is amino-acid biosynthesis; L-isoleucine biosynthesis; L-isoleucine from 2-oxobutanoate: step 2/4. It functions in the pathway amino-acid biosynthesis; L-valine biosynthesis; L-valine from pyruvate: step 2/4. The sequence is that of Ketol-acid reductoisomerase, mitochondrial (ilv-2) from Neurospora crassa (strain ATCC 24698 / 74-OR23-1A / CBS 708.71 / DSM 1257 / FGSC 987).